Reading from the N-terminus, the 247-residue chain is Putative cyclin-T1-1 (247 aa).

The protein belongs to the cyclin family. Cyclin T subfamily.

The polypeptide is Putative cyclin-T1-1 (CYCT1-1) (Arabidopsis thaliana (Mouse-ear cress)).